Here is a 257-residue protein sequence, read N- to C-terminus: Imidazole glycerol phosphate synthase subunit HisF (257 aa).

Residues Asp12 and Asp131 contribute to the active site.

Belongs to the HisA/HisF family. In terms of assembly, heterodimer of HisH and HisF.

It is found in the cytoplasm. It catalyses the reaction 5-[(5-phospho-1-deoxy-D-ribulos-1-ylimino)methylamino]-1-(5-phospho-beta-D-ribosyl)imidazole-4-carboxamide + L-glutamine = D-erythro-1-(imidazol-4-yl)glycerol 3-phosphate + 5-amino-1-(5-phospho-beta-D-ribosyl)imidazole-4-carboxamide + L-glutamate + H(+). It participates in amino-acid biosynthesis; L-histidine biosynthesis; L-histidine from 5-phospho-alpha-D-ribose 1-diphosphate: step 5/9. Its function is as follows. IGPS catalyzes the conversion of PRFAR and glutamine to IGP, AICAR and glutamate. The HisF subunit catalyzes the cyclization activity that produces IGP and AICAR from PRFAR using the ammonia provided by the HisH subunit. In Rhodococcus opacus (strain B4), this protein is Imidazole glycerol phosphate synthase subunit HisF.